A 300-amino-acid chain; its full sequence is Transcription termination/antitermination protein NusG (300 aa).

Residues 1-99 (MSDPNVNDAI…EAEEPELDPI (99 aa)) are disordered. Composition is skewed to acidic residues over residues 14-41 (ESVE…EAAD) and 47-97 (ETDE…PELD).

Belongs to the NusG family.

Functionally, participates in transcription elongation, termination and antitermination. The chain is Transcription termination/antitermination protein NusG from Streptomyces coelicolor (strain ATCC BAA-471 / A3(2) / M145).